The sequence spans 334 residues: tRNA N6-adenosine threonylcarbamoyltransferase (334 aa).

Histidine 111 and histidine 115 together coordinate Fe cation. Substrate is bound by residues 134–138 (IVSGG), aspartate 167, glycine 180, aspartate 184, and asparagine 272. Aspartate 300 serves as a coordination point for Fe cation.

It belongs to the KAE1 / TsaD family. It depends on Fe(2+) as a cofactor.

It localises to the cytoplasm. It carries out the reaction L-threonylcarbamoyladenylate + adenosine(37) in tRNA = N(6)-L-threonylcarbamoyladenosine(37) in tRNA + AMP + H(+). In terms of biological role, required for the formation of a threonylcarbamoyl group on adenosine at position 37 (t(6)A37) in tRNAs that read codons beginning with adenine. Is involved in the transfer of the threonylcarbamoyl moiety of threonylcarbamoyl-AMP (TC-AMP) to the N6 group of A37, together with TsaE and TsaB. TsaD likely plays a direct catalytic role in this reaction. The protein is tRNA N6-adenosine threonylcarbamoyltransferase of Dictyoglomus turgidum (strain DSM 6724 / Z-1310).